The following is a 262-amino-acid chain: Shikimate dehydrogenase (NADP(+)) (262 aa).

Shikimate is bound by residues Ser-15 to Ser-17 and Thr-62. The active-site Proton acceptor is the Lys-66. Glu-78 contacts NADP(+). Asn-87 and Asp-102 together coordinate shikimate. NADP(+) is bound by residues Gly-126–Ala-130, Asn-150–Arg-155, and Met-214. Tyr-216 is a shikimate binding site. An NADP(+)-binding site is contributed by Gly-236.

Belongs to the shikimate dehydrogenase family. As to quaternary structure, homodimer.

The enzyme catalyses shikimate + NADP(+) = 3-dehydroshikimate + NADPH + H(+). It participates in metabolic intermediate biosynthesis; chorismate biosynthesis; chorismate from D-erythrose 4-phosphate and phosphoenolpyruvate: step 4/7. Involved in the biosynthesis of the chorismate, which leads to the biosynthesis of aromatic amino acids. Catalyzes the reversible NADPH linked reduction of 3-dehydroshikimate (DHSA) to yield shikimate (SA). The protein is Shikimate dehydrogenase (NADP(+)) of Acinetobacter baumannii (strain ATCC 17978 / DSM 105126 / CIP 53.77 / LMG 1025 / NCDC KC755 / 5377).